The sequence spans 318 residues: Taste receptor type 2 member 7 (318 aa).

Over 1 to 9 the chain is Extracellular; it reads MADKVQTTL. A helical transmembrane segment spans residues 10 to 30; the sequence is LFLAVGEFSVGILGNAFIGLV. At 31–55 the chain is on the cytoplasmic side; the sequence is NCMDWVKKRKIASIDLILTSLAISR. Residues 56–76 form a helical membrane-spanning segment; it reads ICLLCIILLDCFTLVLYPDVY. At 77–94 the chain is on the extracellular side; sequence ATGKEMRIIDFFWTLTNH. A helical transmembrane segment spans residues 95–115; sequence LSIWFATCLSIYYFFKIGNFF. At 116-128 the chain is on the cytoplasmic side; the sequence is HPLFLWMKWRIDR. Residues 129–149 traverse the membrane as a helical segment; that stretch reads VISWILLGCVVLSVFISLPAT. Topologically, residues 150-187 are extracellular; that stretch reads ENLNADFRFCVKAKRKTNLTWSCRVNKTQHASTKLFLN. N-linked (GlcNAc...) asparagine glycosylation is found at Asn167 and Asn175. Residues 188–208 traverse the membrane as a helical segment; sequence LATLLPFCVCLMSFFLLILSL. Over 209–235 the chain is Cytoplasmic; the sequence is RRHIRRMQLSATGCRDPSTEAHVRALK. A helical membrane pass occupies residues 236-256; the sequence is AVISFLLLFIAYYLSFLIATS. The Extracellular segment spans residues 257-266; sequence SYFMPETELA. The chain crosses the membrane as a helical span at residues 267-287; that stretch reads VIFGESIALIYPSSHSFILIL. At 288–318 the chain is on the cytoplasmic side; sequence GNNKLRYVSLKVIWKVMSILKGRKFQQHKQI.

Belongs to the G-protein coupled receptor T2R family.

Its subcellular location is the membrane. In terms of biological role, gustducin-coupled receptor implicated in the perception of bitter compounds in the oral cavity and the gastrointestinal tract. Signals through PLCB2 and the calcium-regulated cation channel TRPM5. In Gorilla gorilla gorilla (Western lowland gorilla), this protein is Taste receptor type 2 member 7 (TAS2R7).